The following is a 1308-amino-acid chain: Vacuolar transporter chaperone complex subunit 2 (1308 aa).

The SPX domain occupies 1–284 (MKFSKQLSAQ…QSSAASWYMS (284 aa)). The Cytoplasmic segment spans residues 1–1083 (MKFSKQLSAQ…PKTFFANERT (1083 aa)). The segment at 144–220 (PQKRGRATEQ…DGGEGEQDDA (77 aa)) is disordered. Residues 197-209 (SRGEGDAKRRQGD) are compositionally biased toward basic and acidic residues. The interval 265–272 (KITKKYDK) is important for inositol polyphosphate binding. Disordered regions lie at residues 321 to 384 (QQQS…SLAA), 611 to 645 (EGAN…GSDD), 846 to 890 (ATEG…RPRV), 915 to 946 (SAQV…PSAP), and 981 to 1004 (PLLD…APTP). A compositionally biased stretch (basic and acidic residues) spans 332–344 (DPSKAASVKEDRS). The span at 632–641 (EGSGGGGGNR) shows a compositional bias: gly residues. Basic and acidic residues predominate over residues 848-857 (EGGKGKKADR). Polar residues-rich tracts occupy residues 859–871 (SVGQ…NQGD) and 915–938 (SAQV…PSVS). Residues 1084 to 1104 (LLQWMNTAVLIATISITLMNF) traverse the membrane as a helical segment. The Vacuolar segment spans residues 1105 to 1110 (GNPVGR). Residues 1111–1131 (IAGLLMSPVAVFFIGYSFWVY) form a helical membrane-spanning segment. The Cytoplasmic portion of the chain corresponds to 1132 to 1152 (LRRARALERKEPIAYNDKLGP). Residues 1153-1173 (SILVVTLMLSLSAVIALNLLY) form a helical membrane-spanning segment. At 1174-1308 (HEGEAQLPIT…EGARVTAGAK (135 aa)) the chain is on the vacuolar side.

It belongs to the VTC2/3 family. As to quaternary structure, the VTC core complex is an integral membrane heterooligomer composed of at least the catalytic subunit vtc4 and the accessory subunits vtc1 and vtc2. vtc1 is a small membrane protein without hydrophilic domain. Vtc2 and vtc4 are related and have 2 hydrophilic domains that face the cytosol, an N-terminal SPX domain and the central core domain. The central core in vtc4 is the catalytic domain.

The protein localises to the vacuole membrane. Accessory subunit of the vacuolar transporter chaperone (VTC) complex. The VTC complex acts as a vacuolar polyphosphate polymerase that catalyzes the synthesis of inorganic polyphosphate (polyP) via transfer of phosphate from ATP to a growing polyP chain, releasing ADP. VTC exposes its catalytic domain vtc4 to the cytosol, where the growing polyP chain winds through a tunnel-shaped pocket, integrating cytoplasmic polymer synthesis with polyP membrane translocation. The VTC complex carries 9 vacuolar transmembrane domains, which are likely to constitute the translocation channel into the organelle lumen. PolyP synthesis is tightly coupled to its transport into the vacuole lumen, in order to avoid otherwise toxic intermediates in the cytosol, and it depends on the proton gradient across the membrane, formed by V-ATPase. The VTC complex also plays a role in vacuolar membrane fusion. The protein is Vacuolar transporter chaperone complex subunit 2 (vtc2) of Toxoplasma gondii (strain ATCC 50611 / Me49).